The following is a 310-amino-acid chain: ADP-L-glycero-D-manno-heptose-6-epimerase (310 aa).

NADP(+) is bound by residues 10–11 (FI), 31–32 (DN), lysine 38, lysine 53, 75–79 (EGACS), and asparagine 92. Tyrosine 140 (proton acceptor) is an active-site residue. Lysine 144 serves as a coordination point for NADP(+). A substrate-binding site is contributed by asparagine 169. 2 residues coordinate NADP(+): valine 170 and lysine 178. The active-site Proton acceptor is lysine 178. Substrate is bound by residues serine 180, histidine 187, 201–204 (FEGS), and arginine 209. Lysine 267 carries the N6-acetyllysine modification. Tyrosine 272 serves as a coordination point for substrate.

The protein belongs to the NAD(P)-dependent epimerase/dehydratase family. HldD subfamily. In terms of assembly, homopentamer. It depends on NADP(+) as a cofactor.

It catalyses the reaction ADP-D-glycero-beta-D-manno-heptose = ADP-L-glycero-beta-D-manno-heptose. It functions in the pathway nucleotide-sugar biosynthesis; ADP-L-glycero-beta-D-manno-heptose biosynthesis; ADP-L-glycero-beta-D-manno-heptose from D-glycero-beta-D-manno-heptose 7-phosphate: step 4/4. In terms of biological role, catalyzes the interconversion between ADP-D-glycero-beta-D-manno-heptose and ADP-L-glycero-beta-D-manno-heptose via an epimerization at carbon 6 of the heptose. The polypeptide is ADP-L-glycero-D-manno-heptose-6-epimerase (Shigella boydii serotype 18 (strain CDC 3083-94 / BS512)).